A 448-amino-acid chain; its full sequence is Phosphoglucosamine mutase (448 aa).

The active-site Phosphoserine intermediate is the serine 100. The Mg(2+) site is built by serine 100, aspartate 240, aspartate 242, and aspartate 244. At serine 100 the chain carries Phosphoserine.

Belongs to the phosphohexose mutase family. It depends on Mg(2+) as a cofactor. Post-translationally, activated by phosphorylation.

The catalysed reaction is alpha-D-glucosamine 1-phosphate = D-glucosamine 6-phosphate. Catalyzes the conversion of glucosamine-6-phosphate to glucosamine-1-phosphate. The polypeptide is Phosphoglucosamine mutase (Bacillus cereus (strain G9842)).